The sequence spans 176 residues: Heme oxygenase HutZ (176 aa).

His170 is a binding site for heme.

This sequence belongs to the heme oxygenase HugZ/HutZ family. In terms of assembly, homodimer. Interacts with HutX, leading to the transfer of the heme from HutX to apo-HutZ.

The enzyme catalyses heme b + 3 AH2 + 3 O2 + 2 H(+) = biliverdin IXbeta + CO + Fe(2+) + 3 A + 3 H2O. It catalyses the reaction heme b + 3 AH2 + 3 O2 + 3 H(+) = biliverdin IXdelta + CO + Fe(2+) + 3 A + 3 H2O. Activity is pH-dependent. A proximal hydrogen bond between Asp-132 and the heme axial ligant His-170 is essential for heme degradation activity. Heme-degradation reaction is inhibited by iron chelators. Functionally, involved in heme degradation. Catalyzes the degradation of heme to biliverdin, with the release of iron. Forms biliverdin beta and delta. Binds heme with high efficiency. The protein is Heme oxygenase HutZ of Vibrio cholerae serotype O1 (strain ATCC 39315 / El Tor Inaba N16961).